Here is a 424-residue protein sequence, read N- to C-terminus: Arginine ADP-riboxanase OspC4 (424 aa).

NAD(+) is bound by residues H85, Q86, S87, L91, I104, N114, F130, H148, F153, D173, and E268. The active site involves E268. 3 ANK repeats span residues 311-340, 355-386, and 393-422; these read MAHQ…FTKQ, NLYD…DVNK, and SGDT…GIRQ.

Belongs to the OspC family.

The protein localises to the secreted. The protein resides in the host cytoplasm. It catalyses the reaction L-arginyl-[protein] + NAD(+) = ADP-riboxanated L-argininyl-[protein] + nicotinamide + NH4(+) + H(+). ADP-riboxanase effector that mediates arginine ADP-riboxanation of host caspase CASP4/CASP11, thereby inhibiting pyroptosis. This chain is Arginine ADP-riboxanase OspC4, found in Shigella flexneri.